An 86-amino-acid polypeptide reads, in one-letter code: UPF0457 protein SERP1772 (86 aa).

The protein belongs to the UPF0457 family.

The chain is UPF0457 protein SERP1772 from Staphylococcus epidermidis (strain ATCC 35984 / DSM 28319 / BCRC 17069 / CCUG 31568 / BM 3577 / RP62A).